Consider the following 401-residue polypeptide: Beta-ketoadipyl-CoA thiolase (401 aa).

Cys-90 serves as the catalytic Acyl-thioester intermediate. Active-site proton acceptor residues include His-357 and Cys-387.

The protein belongs to the thiolase-like superfamily. Thiolase family.

It carries out the reaction succinyl-CoA + acetyl-CoA = 3-oxoadipyl-CoA + CoA. It functions in the pathway aromatic compound metabolism; beta-ketoadipate pathway; acetyl-CoA and succinyl-CoA from 3-oxoadipate: step 2/2. Its function is as follows. Catalyzes thiolytic cleavage of beta-ketoadipyl-CoA to succinyl-CoA and acetyl-CoA. This chain is Beta-ketoadipyl-CoA thiolase (catF), found in Acinetobacter baylyi (strain ATCC 33305 / BD413 / ADP1).